Reading from the N-terminus, the 436-residue chain is GTPase Der (436 aa).

EngA-type G domains follow at residues 4 to 167 and 176 to 351; these read PVVA…KNLP and VQFC…ENHA. GTP contacts are provided by residues 10–17, 57–61, 119–122, 182–189, 229–233, and 294–297; these read GRPNVGKS, DTGGI, NKLD, DTAGM, and NKWD. In terms of domain architecture, KH-like spans 352–436; that stretch reads MRVQTNILND…PIKIFARARK (85 aa).

The protein belongs to the TRAFAC class TrmE-Era-EngA-EngB-Septin-like GTPase superfamily. EngA (Der) GTPase family. Associates with the 50S ribosomal subunit.

GTPase that plays an essential role in the late steps of ribosome biogenesis. In Bacillus pumilus (strain SAFR-032), this protein is GTPase Der.